A 403-amino-acid polypeptide reads, in one-letter code: Eukaryotic translation initiation factor 3 subunit H (403 aa).

An MPN domain is found at 57 to 206; sequence VRLDGLALTK…VKAYRLSPSF (150 aa). The segment at 99–122 is disordered; sequence ALPNPGRSNSERDEEEDRSSRNAT.

This sequence belongs to the eIF-3 subunit H family. As to quaternary structure, component of the eukaryotic translation initiation factor 3 (eIF-3) complex.

It is found in the cytoplasm. In terms of biological role, component of the eukaryotic translation initiation factor 3 (eIF-3) complex, which is involved in protein synthesis of a specialized repertoire of mRNAs and, together with other initiation factors, stimulates binding of mRNA and methionyl-tRNAi to the 40S ribosome. The eIF-3 complex specifically targets and initiates translation of a subset of mRNAs involved in cell proliferation. This Mycosarcoma maydis (Corn smut fungus) protein is Eukaryotic translation initiation factor 3 subunit H.